Here is a 456-residue protein sequence, read N- to C-terminus: Protein disulfide-isomerase TMX3 (456 aa).

Positions 1 to 29 (MANAVGRRSWAALRLCAAVILLDLAVCKG) are cleaved as a signal peptide. Positions 30–131 (FVEDLNESFK…KDDIIEFAHR (102 aa)) constitute a Thioredoxin domain. At 30-378 (FVEDLNESFK…TIVSIFKSSP (349 aa)) the chain is on the lumenal side. N-linked (GlcNAc...) asparagine glycosylation occurs at asparagine 35. Active-site nucleophile residues include cysteine 56 and cysteine 59. A disulfide bridge links cysteine 56 with cysteine 59. N-linked (GlcNAc...) asparagine glycans are attached at residues asparagine 261 and asparagine 316. Residues 379–399 (LMGCFLFGLPLGVISIMCYGI) traverse the membrane as a helical segment. At 400-456 (YTADTDGGYIEERYEVSKSEMENQEQIEESKEQESSSGGSLAPTVQEPKDVLEKKKD) the chain is on the cytoplasmic side. The tract at residues 416–456 (SKSEMENQEQIEESKEQESSSGGSLAPTVQEPKDVLEKKKD) is disordered. Residues 446 to 456 (EPKDVLEKKKD) are compositionally biased toward basic and acidic residues. A Di-lysine motif motif is present at residues 453–456 (KKKD).

It belongs to the protein disulfide isomerase family.

Its subcellular location is the endoplasmic reticulum membrane. It catalyses the reaction Catalyzes the rearrangement of -S-S- bonds in proteins.. Functionally, probable disulfide isomerase, which participates in the folding of proteins containing disulfide bonds. May act as a dithiol oxidase. Acts as a regulator of endoplasmic reticulum-mitochondria contact sites via its ability to regulate redox signals. The polypeptide is Protein disulfide-isomerase TMX3 (Tmx3) (Mus musculus (Mouse)).